The primary structure comprises 423 residues: UDP-N-acetylglucosamine 1-carboxyvinyltransferase 1 (423 aa).

Residue Lys23–Asn24 participates in phosphoenolpyruvate binding. Arg96 serves as a coordination point for UDP-N-acetyl-alpha-D-glucosamine. Cys120 functions as the Proton donor in the catalytic mechanism. Cys120 bears the 2-(S-cysteinyl)pyruvic acid O-phosphothioketal mark. Residues Arg125 to Leu129, Asp309, and Val331 each bind UDP-N-acetyl-alpha-D-glucosamine.

Belongs to the EPSP synthase family. MurA subfamily.

The protein resides in the cytoplasm. The enzyme catalyses phosphoenolpyruvate + UDP-N-acetyl-alpha-D-glucosamine = UDP-N-acetyl-3-O-(1-carboxyvinyl)-alpha-D-glucosamine + phosphate. Its pathway is cell wall biogenesis; peptidoglycan biosynthesis. Cell wall formation. Adds enolpyruvyl to UDP-N-acetylglucosamine. The polypeptide is UDP-N-acetylglucosamine 1-carboxyvinyltransferase 1 (Streptococcus thermophilus (strain CNRZ 1066)).